Here is a 50-residue protein sequence, read N- to C-terminus: uncharacterized protein (50 aa).

The tract at residues 1–50 (MKTGFWQQVLPKRAGRRKEHPVQYMPHKKEENATGLMNPSLHTSHSAILK) is disordered. Residues 35-50 (GLMNPSLHTSHSAILK) show a composition bias toward polar residues.

This is an uncharacterized protein from Treponema pallidum (strain Nichols).